A 230-amino-acid chain; its full sequence is Putative transcription factor bHLH107 (230 aa).

One can recognise a bHLH domain in the interval 44–93 (ASLRNHKEAERKRRARINSHLNKLRKLLSCNSKTDKSTLLAKVVQRVKEL).

Homodimer.

The protein localises to the nucleus. This Arabidopsis thaliana (Mouse-ear cress) protein is Putative transcription factor bHLH107 (BHLH107).